A 369-amino-acid chain; its full sequence is Protein disulfide-isomerase erp38 (369 aa).

The N-terminal stretch at 1–18 (MVLLKSLVVASLAAAVAA) is a signal peptide. 2 Thioredoxin domains span residues 19–130 (KSAV…EKTG) and 131–251 (VKAR…EKAG). Residues C50, C53, C170, and C173 each act as nucleophile in the active site. Intrachain disulfides connect C50–C53 and C170–C173. The Prevents secretion from ER motif lies at 366-369 (KEEL).

This sequence belongs to the protein disulfide isomerase family.

It is found in the endoplasmic reticulum lumen. The enzyme catalyses Catalyzes the rearrangement of -S-S- bonds in proteins.. This is Protein disulfide-isomerase erp38 (erp38) from Neurospora crassa (strain ATCC 24698 / 74-OR23-1A / CBS 708.71 / DSM 1257 / FGSC 987).